We begin with the raw amino-acid sequence, 241 residues long: Pyridoxine 5'-phosphate synthase (241 aa).

Asn7 provides a ligand contact to 3-amino-2-oxopropyl phosphate. 9–10 contacts 1-deoxy-D-xylulose 5-phosphate; that stretch reads DH. Residue Arg18 coordinates 3-amino-2-oxopropyl phosphate. His43 (proton acceptor) is an active-site residue. Positions 45 and 50 each coordinate 1-deoxy-D-xylulose 5-phosphate. The active-site Proton acceptor is Glu70. 1-deoxy-D-xylulose 5-phosphate is bound at residue Thr100. His191 acts as the Proton donor in catalysis. 3-amino-2-oxopropyl phosphate-binding positions include Gly192 and 213–214; that span reads GH.

It belongs to the PNP synthase family. Homooctamer; tetramer of dimers.

The protein localises to the cytoplasm. It carries out the reaction 3-amino-2-oxopropyl phosphate + 1-deoxy-D-xylulose 5-phosphate = pyridoxine 5'-phosphate + phosphate + 2 H2O + H(+). Its pathway is cofactor biosynthesis; pyridoxine 5'-phosphate biosynthesis; pyridoxine 5'-phosphate from D-erythrose 4-phosphate: step 5/5. In terms of biological role, catalyzes the complicated ring closure reaction between the two acyclic compounds 1-deoxy-D-xylulose-5-phosphate (DXP) and 3-amino-2-oxopropyl phosphate (1-amino-acetone-3-phosphate or AAP) to form pyridoxine 5'-phosphate (PNP) and inorganic phosphate. This is Pyridoxine 5'-phosphate synthase from Nostoc punctiforme (strain ATCC 29133 / PCC 73102).